A 425-amino-acid chain; its full sequence is uncharacterized protein (425 aa).

The CHY-type zinc-finger motif lies at 135-202 (KEQEILGCSH…AAQYCKYCKN (68 aa)). Residues C142, H144, C153, C156, C162, C165, H166, H172, C184, C187, C197, C200, C209, C212, H225, C226, C229, C232, H244, C245, C248, C251, H260, and C262 each coordinate Zn(2+). The CTCHY-type zinc-finger motif lies at 204–270 (MGRYYCNKCK…RCIERSTDCN (67 aa)). The RING-type; atypical zinc-finger motif lies at 271–313 (CPICGEYMFNSRERVIFLSCSHPLHQRCHEEYIRTNYRCPTCY).

This is an uncharacterized protein from Schizosaccharomyces pombe (strain 972 / ATCC 24843) (Fission yeast).